The following is a 248-amino-acid chain: Probable S-methyl-5'-thioinosine phosphorylase (248 aa).

Phosphate contacts are provided by residues threonine 12 and 54-55 (RH). Methionine 187 provides a ligand contact to substrate. Threonine 188 provides a ligand contact to phosphate. Residue 211–213 (NWA) participates in substrate binding.

It belongs to the PNP/MTAP phosphorylase family. MTAP subfamily. In terms of assembly, homotrimer.

The enzyme catalyses S-methyl-5'-thioinosine + phosphate = 5-(methylsulfanyl)-alpha-D-ribose 1-phosphate + hypoxanthine. The protein operates within purine metabolism; purine nucleoside salvage. Catalyzes the reversible phosphorylation of S-methyl-5'-thioinosine (MTI) to hypoxanthine and 5-methylthioribose-1-phosphate. Involved in the breakdown of S-methyl-5'-thioadenosine (MTA), a major by-product of polyamine biosynthesis. Catabolism of (MTA) occurs via deamination to MTI and phosphorolysis to hypoxanthine. The chain is Probable S-methyl-5'-thioinosine phosphorylase from Xylella fastidiosa (strain Temecula1 / ATCC 700964).